The primary structure comprises 302 residues: Acetylglutamate kinase (302 aa).

Residues 75–76 (GG), R97, and N198 each bind substrate.

Belongs to the acetylglutamate kinase family. ArgB subfamily.

Its subcellular location is the cytoplasm. It carries out the reaction N-acetyl-L-glutamate + ATP = N-acetyl-L-glutamyl 5-phosphate + ADP. It functions in the pathway amino-acid biosynthesis; L-arginine biosynthesis; N(2)-acetyl-L-ornithine from L-glutamate: step 2/4. Catalyzes the ATP-dependent phosphorylation of N-acetyl-L-glutamate. The chain is Acetylglutamate kinase from Leifsonia xyli subsp. xyli (strain CTCB07).